Consider the following 189-residue polypeptide: Dihydrofolate reductase (189 aa).

The DHFR domain occupies 3-184 (SLNSIVAVCQ…IQYKFEVYQK (182 aa)). NADP(+) is bound by residues A9 and 15–21 (GIGKDGN). Residue 30 to 35 (EYKYFQ) coordinates substrate. Residue 54 to 56 (KKT) coordinates NADP(+). Residues N64 and R70 each contribute to the substrate site. NADP(+) is bound by residues 76 to 78 (SRE) and 116 to 123 (GGTAVYKA).

Belongs to the dihydrofolate reductase family.

It catalyses the reaction (6S)-5,6,7,8-tetrahydrofolate + NADP(+) = 7,8-dihydrofolate + NADPH + H(+). It participates in cofactor biosynthesis; tetrahydrofolate biosynthesis; 5,6,7,8-tetrahydrofolate from 7,8-dihydrofolate: step 1/1. Functionally, key enzyme in folate metabolism. Contributes to the de novo mitochondrial thymidylate biosynthesis pathway. Catalyzes an essential reaction for de novo glycine and purine synthesis, and for DNA precursor synthesis. May bind to mRNA. The polypeptide is Dihydrofolate reductase (DHFR) (Gallus gallus (Chicken)).